Reading from the N-terminus, the 489-residue chain is MKLQTLLSRLPGFWVHRGGNPDIVALEMDSRHVTPGSLFFCVKGFTVDGHDFAEQAVERGAVAIVAERPLSVNVPVVVVPDSRRAMAILADAFYGQPTHRLHLIGVTGTNGKTTTTHIIEQVARKAGKKIGLIGTVGTKIGDRSYPAVNTTPESLVLQRTFKQMVDEGVEFVTMEVSSHALHQGRVHGCDYDVAVFTNLTQDHLDYHGTMEEYRNAKGLLFAQLGNRYDERRPKFAVLNHDDPVSQYYKHMTAAPIITYGIKEKSDVMAEQIEMTPGGMAFQLCTPHGTMAIETKLVGLFNVYNLLAATAACLASGFSLATIAEALANVSPVPGRFETVDEGQNFTVIVDYAHTPDSVENALKTVRQFAKRNVYVVIGCGGDRDRTKRPLMAQAAVRYADVAVFTSDNPRSEDPRQILRDMEAGVSAGDGTYVTIPDREEAIRYAIGQAQEGDVVLIAGKGHETYQIIGDDVIDFDDRAVARAAVKERR.

Residue Ser30 coordinates UDP-N-acetyl-alpha-D-muramoyl-L-alanyl-D-glutamate. ATP is bound at residue 108-114; it reads GTNGKTT. Residues Asn149, 150–151, Ser177, Gln183, and Arg185 contribute to the UDP-N-acetyl-alpha-D-muramoyl-L-alanyl-D-glutamate site; that span reads TT. Lys217 carries the N6-carboxylysine modification. Residues Arg383, 407–410, Gly459, and Glu463 each bind meso-2,6-diaminopimelate; that span reads DNPR. The short motif at 407–410 is the Meso-diaminopimelate recognition motif element; the sequence is DNPR.

This sequence belongs to the MurCDEF family. MurE subfamily. Mg(2+) serves as cofactor. Post-translationally, carboxylation is probably crucial for Mg(2+) binding and, consequently, for the gamma-phosphate positioning of ATP.

Its subcellular location is the cytoplasm. It carries out the reaction UDP-N-acetyl-alpha-D-muramoyl-L-alanyl-D-glutamate + meso-2,6-diaminopimelate + ATP = UDP-N-acetyl-alpha-D-muramoyl-L-alanyl-gamma-D-glutamyl-meso-2,6-diaminopimelate + ADP + phosphate + H(+). The protein operates within cell wall biogenesis; peptidoglycan biosynthesis. In terms of biological role, catalyzes the addition of meso-diaminopimelic acid to the nucleotide precursor UDP-N-acetylmuramoyl-L-alanyl-D-glutamate (UMAG) in the biosynthesis of bacterial cell-wall peptidoglycan. The sequence is that of UDP-N-acetylmuramoyl-L-alanyl-D-glutamate--2,6-diaminopimelate ligase from Geobacillus thermodenitrificans (strain NG80-2).